A 379-amino-acid polypeptide reads, in one-letter code: Queuine tRNA-ribosyltransferase (379 aa).

The Proton acceptor role is filled by D93. Residues 93-97, D147, Q191, and G218 contribute to the substrate site; that span reads DSGGF. Residues 249-255 are RNA binding; that stretch reads GVGKPED. The active-site Nucleophile is D268. Positions 273 to 277 are RNA binding; important for wobble base 34 recognition; that stretch reads TRNAR. The Zn(2+) site is built by C306, C308, C311, and H337.

It belongs to the queuine tRNA-ribosyltransferase family. In terms of assembly, homodimer. Within each dimer, one monomer is responsible for RNA recognition and catalysis, while the other monomer binds to the replacement base PreQ1. Zn(2+) serves as cofactor.

It catalyses the reaction 7-aminomethyl-7-carbaguanine + guanosine(34) in tRNA = 7-aminomethyl-7-carbaguanosine(34) in tRNA + guanine. It functions in the pathway tRNA modification; tRNA-queuosine biosynthesis. In terms of biological role, catalyzes the base-exchange of a guanine (G) residue with the queuine precursor 7-aminomethyl-7-deazaguanine (PreQ1) at position 34 (anticodon wobble position) in tRNAs with GU(N) anticodons (tRNA-Asp, -Asn, -His and -Tyr). Catalysis occurs through a double-displacement mechanism. The nucleophile active site attacks the C1' of nucleotide 34 to detach the guanine base from the RNA, forming a covalent enzyme-RNA intermediate. The proton acceptor active site deprotonates the incoming PreQ1, allowing a nucleophilic attack on the C1' of the ribose to form the product. After dissociation, two additional enzymatic reactions on the tRNA convert PreQ1 to queuine (Q), resulting in the hypermodified nucleoside queuosine (7-(((4,5-cis-dihydroxy-2-cyclopenten-1-yl)amino)methyl)-7-deazaguanosine). In Actinobacillus succinogenes (strain ATCC 55618 / DSM 22257 / CCUG 43843 / 130Z), this protein is Queuine tRNA-ribosyltransferase.